The sequence spans 165 residues: 3-hydroxyacyl-[acyl-carrier-protein] dehydratase FERN, mitochondrial (165 aa).

Residues 1–35 (MLMKRLFSSSHVFSSSSASSNLLKIGSVLKQARTF) constitute a mitochondrion transit peptide. In terms of domain architecture, MaoC-like spans 36–124 (ADDDVLGYSK…AVSIRQIKNK (89 aa)).

Homodimer.

It localises to the mitochondrion. It catalyses the reaction a (3R)-hydroxyacyl-[ACP] = a (2E)-enoyl-[ACP] + H2O. The protein operates within lipid metabolism; fatty acid biosynthesis. 3-hydroxyl-[acyl-carrier-protein] (3-hydroxyl-ACP) dehydratase required for mitochondrial fatty acid synthesis (mtFAS). Essential for photorespiration, tomato morphogenesis and plant development, probably by influencing mitochondrial membrane lipid composition and other lipid metabolic pathways, and by contributing to energy supply and reactive oxygen species (ROS) homeostasis. This Solanum lycopersicum (Tomato) protein is 3-hydroxyacyl-[acyl-carrier-protein] dehydratase FERN, mitochondrial.